The following is a 141-amino-acid chain: uncharacterized protein (141 aa).

The region spanning 13–141 (VTKGTELEKE…LKGILDRYFK (129 aa)) is the Ferritin-like diiron domain. Positions 63, 66, 125, and 128 each coordinate Fe cation.

This is an uncharacterized protein from Methanocaldococcus jannaschii (strain ATCC 43067 / DSM 2661 / JAL-1 / JCM 10045 / NBRC 100440) (Methanococcus jannaschii).